We begin with the raw amino-acid sequence, 90 residues long: MSSTSQKHRDFVAEPMGEKSVQCLAGIGDTLGRRLEEKGFDKAYVVLGQFLVLKKDEELFKEWLKDACSANAKQSRDCYGCLKEWCDAFL.

The protein belongs to the BAF family. As to quaternary structure, homodimer. Interacts with nemp1a and nemp1b.

It is found in the nucleus. The protein resides in the chromosome. The protein localises to the nucleus envelope. Its subcellular location is the cytoplasm. In terms of biological role, non-specific DNA-binding protein that plays key roles in mitotic nuclear reassembly, chromatin organization, DNA damage response, gene expression and intrinsic immunity against foreign DNA. Contains two non-specific double-stranded DNA (dsDNA)-binding sites which promote DNA cross-bridging. Plays a key role in nuclear membrane reformation at the end of mitosis by driving formation of a single nucleus in a spindle-independent manner. Transiently cross-bridges anaphase chromosomes via its ability to bridge distant DNA sites, leading to the formation of a dense chromatin network at the chromosome ensemble surface that limits membranes to the surface. Also acts as a negative regulator of innate immune activation by restricting CGAS activity toward self-DNA upon acute loss of nuclear membrane integrity. Outcompetes CGAS for DNA-binding, thereby preventing CGAS activation and subsequent damaging autoinflammatory responses. Also involved in DNA damage response; acts by inhibiting the ADP-ribosyltransferase activity of PARP1. Involved in the recognition of exogenous dsDNA in the cytosol: associates with exogenous dsDNA immediately after its appearance in the cytosol at endosome breakdown and is required to avoid autophagy. The protein is Barrier-to-autointegration factor B (banf1-b) of Xenopus laevis (African clawed frog).